A 148-amino-acid polypeptide reads, in one-letter code: Protein F15 (148 aa).

The protein belongs to the poxviridae F15 protein family.

This chain is Protein F15, found in Fowlpox virus (strain NVSL) (FPV).